We begin with the raw amino-acid sequence, 130 residues long: MVKLKVLSPNGTLFDEKIEMVIVKGAEGYAGFMRNTQPSIFAINNSVGYITYPDKTKKSVVIENATLYCNKDLIKIFALDFVIADNLSYDEIMKRKKDLESKIKDTTDTKELIRLQHALDIELLKLKEAK.

The protein belongs to the ATPase epsilon chain family. As to quaternary structure, F-type ATPases have 2 components, CF(1) - the catalytic core - and CF(0) - the membrane proton channel. CF(1) has five subunits: alpha(3), beta(3), gamma(1), delta(1), epsilon(1). CF(0) has three main subunits: a, b and c.

It is found in the cell membrane. Its function is as follows. Produces ATP from ADP in the presence of a proton gradient across the membrane. This chain is ATP synthase epsilon chain (atpC), found in Mycoplasmoides gallisepticum (strain R(low / passage 15 / clone 2)) (Mycoplasma gallisepticum).